We begin with the raw amino-acid sequence, 415 residues long: Serine/threonine transporter SstT (415 aa).

Transmembrane regions (helical) follow at residues I23–A43, L47–V67, I85–F105, A144–L164, A181–V201, L220–F240, I293–L313, and V333–I353.

Belongs to the dicarboxylate/amino acid:cation symporter (DAACS) (TC 2.A.23) family.

Its subcellular location is the cell inner membrane. The enzyme catalyses L-serine(in) + Na(+)(in) = L-serine(out) + Na(+)(out). It carries out the reaction L-threonine(in) + Na(+)(in) = L-threonine(out) + Na(+)(out). Its function is as follows. Involved in the import of serine and threonine into the cell, with the concomitant import of sodium (symport system). This Klebsiella pneumoniae subsp. pneumoniae (strain ATCC 700721 / MGH 78578) protein is Serine/threonine transporter SstT.